The chain runs to 820 residues: Quinate repressor protein (820 aa).

Residues 25–79 (SFEQMLLQQDSNESSRRTSPSRTHSRVDLERHSSHIVSLSSSNGSPSLEDPENRL) form a disordered region. Residues 59-71 (HIVSLSSSNGSPS) show a composition bias toward low complexity.

In the N-terminal section; belongs to the shikimate kinase family. The protein in the 2nd section; belongs to the type-I 3-dehydroquinase family. This sequence in the C-terminal section; belongs to the shikimate dehydrogenase family. As to quaternary structure, interacts with qutA; transcriptional activator of the quinate utilization pathway genes.

In terms of biological role, multi-domain repressor protein that negatively regulates transcription of the quinate utilization pathway genes. May mediate its repressor activity by binding directly to the qutA activator protein. The sequence is that of Quinate repressor protein (qutR) from Talaromyces stipitatus (strain ATCC 10500 / CBS 375.48 / QM 6759 / NRRL 1006) (Penicillium stipitatum).